A 64-amino-acid polypeptide reads, in one-letter code: Large ribosomal subunit protein bL35 (64 aa).

It belongs to the bacterial ribosomal protein bL35 family.

This is Large ribosomal subunit protein bL35 from Shewanella frigidimarina (strain NCIMB 400).